Consider the following 250-residue polypeptide: Corrinoid adenosyltransferase MMAB (250 aa).

The transit peptide at 1 to 32 (MAVCGLGSRLGLGSRLGLRGCFGAARLLYPRF) directs the protein to the mitochondrion. The tract at residues 34-59 (SRGPQGVEDGDRPQPSSKTPRIPKIY) is disordered. ATP is bound by residues 60–63 (TKTG), 68–69 (SS), and lysine 78. Residue serine 134 is modified to Phosphoserine. ATP is bound at residue 190–194 (RRAER). Lysine 211 is subject to N6-succinyllysine. Asparagine 214 is a binding site for ATP. At lysine 230 the chain carries N6-acetyllysine; alternate. Lysine 230 bears the N6-succinyllysine; alternate mark.

The protein belongs to the Cob(I)alamin adenosyltransferase family. In terms of assembly, homotrimer. As to expression, expressed in liver and skeletal muscle.

The protein resides in the mitochondrion. It carries out the reaction cob(I)alamin-[corrinoid adenosyltransferase] + ATP = apo-[corrinoid adenosyltransferase] + adenosylcob(III)alamin + triphosphate. Functionally, converts cob(I)alamin to adenosylcobalamin (adenosylcob(III)alamin), a coenzyme for methylmalonyl-CoA mutase, therefore participates in the final step of the vitamin B12 conversion. Generates adenosylcobalamin (AdoCbl) and directly delivers the cofactor to MUT in a transfer that is stimulated by ATP-binding to MMAB and gated by MMAA. This is Corrinoid adenosyltransferase MMAB from Homo sapiens (Human).